Consider the following 140-residue polypeptide: L-fucose mutarotase (140 aa).

Histidine 22 acts as the Proton donor in catalysis. Residues aspartate 30, arginine 107, and 129–131 (YGN) contribute to the substrate site.

Belongs to the RbsD / FucU family. FucU mutarotase subfamily. In terms of assembly, homodecamer.

Its subcellular location is the cytoplasm. It catalyses the reaction alpha-L-fucose = beta-L-fucose. Its pathway is carbohydrate metabolism; L-fucose metabolism. Its function is as follows. Involved in the anomeric conversion of L-fucose. In Citrobacter koseri (strain ATCC BAA-895 / CDC 4225-83 / SGSC4696), this protein is L-fucose mutarotase.